Consider the following 143-residue polypeptide: Ribosome-binding factor A (143 aa).

Residues 123–143 (VRAQAAQAKPAGEANPYKERN) are disordered. Low complexity predominate over residues 124–136 (RAQAAQAKPAGEA).

This sequence belongs to the RbfA family. Monomer. Binds 30S ribosomal subunits, but not 50S ribosomal subunits or 70S ribosomes.

Its subcellular location is the cytoplasm. One of several proteins that assist in the late maturation steps of the functional core of the 30S ribosomal subunit. Associates with free 30S ribosomal subunits (but not with 30S subunits that are part of 70S ribosomes or polysomes). Required for efficient processing of 16S rRNA. May interact with the 5'-terminal helix region of 16S rRNA. In Corynebacterium urealyticum (strain ATCC 43042 / DSM 7109), this protein is Ribosome-binding factor A.